The sequence spans 598 residues: Elongation factor 4 (598 aa).

Residues 4-186 (INIRNFAIIA…AIVSRLPAPS (183 aa)) enclose the tr-type G domain. GTP contacts are provided by residues 16-21 (DHGKST) and 133-136 (NKID).

This sequence belongs to the TRAFAC class translation factor GTPase superfamily. Classic translation factor GTPase family. LepA subfamily.

Its subcellular location is the cell inner membrane. It catalyses the reaction GTP + H2O = GDP + phosphate + H(+). Functionally, required for accurate and efficient protein synthesis under certain stress conditions. May act as a fidelity factor of the translation reaction, by catalyzing a one-codon backward translocation of tRNAs on improperly translocated ribosomes. Back-translocation proceeds from a post-translocation (POST) complex to a pre-translocation (PRE) complex, thus giving elongation factor G a second chance to translocate the tRNAs correctly. Binds to ribosomes in a GTP-dependent manner. The sequence is that of Elongation factor 4 from Ehrlichia ruminantium (strain Welgevonden).